A 393-amino-acid chain; its full sequence is Riboflavin biosynthesis protein RibBA (393 aa).

The interval 1–200 (MQFDNIDSAL…IDDLIEYRKK (200 aa)) is DHBP synthase. D-ribulose 5-phosphate is bound by residues 27–28 (RE), aspartate 32, 139–143 (RNGHT), and glutamate 163. Position 28 (glutamate 28) interacts with Mg(2+). Histidine 142 is a Mg(2+) binding site. Positions 201-393 (LEPEIEFKAK…TKKIKMGHLI (193 aa)) are GTP cyclohydrolase II. 249–253 (RLHSA) provides a ligand contact to GTP. 3 residues coordinate Zn(2+): cysteine 254, cysteine 265, and cysteine 267. GTP contacts are provided by residues glutamine 270, 291–293 (EGR), and threonine 313. The active-site Proton acceptor; for GTP cyclohydrolase activity is the aspartate 325. The active-site Nucleophile; for GTP cyclohydrolase activity is arginine 327. GTP-binding residues include serine 348 and lysine 353.

It in the N-terminal section; belongs to the DHBP synthase family. In the C-terminal section; belongs to the GTP cyclohydrolase II family. Mg(2+) is required as a cofactor. Mn(2+) serves as cofactor. It depends on Zn(2+) as a cofactor.

It catalyses the reaction D-ribulose 5-phosphate = (2S)-2-hydroxy-3-oxobutyl phosphate + formate + H(+). It carries out the reaction GTP + 4 H2O = 2,5-diamino-6-hydroxy-4-(5-phosphoribosylamino)-pyrimidine + formate + 2 phosphate + 3 H(+). Its pathway is cofactor biosynthesis; riboflavin biosynthesis; 2-hydroxy-3-oxobutyl phosphate from D-ribulose 5-phosphate: step 1/1. It functions in the pathway cofactor biosynthesis; riboflavin biosynthesis; 5-amino-6-(D-ribitylamino)uracil from GTP: step 1/4. Its function is as follows. Catalyzes the conversion of D-ribulose 5-phosphate to formate and 3,4-dihydroxy-2-butanone 4-phosphate. Catalyzes the conversion of GTP to 2,5-diamino-6-ribosylamino-4(3H)-pyrimidinone 5'-phosphate (DARP), formate and pyrophosphate. In Staphylococcus aureus (strain COL), this protein is Riboflavin biosynthesis protein RibBA.